Reading from the N-terminus, the 564-residue chain is Dihydroxy-acid dehydratase 2 (564 aa).

C59 contacts [2Fe-2S] cluster. D91 contacts Mg(2+). Residue C132 participates in [2Fe-2S] cluster binding. Mg(2+) contacts are provided by D133 and K134. K134 carries the post-translational modification N6-carboxylysine. Residue C204 participates in [2Fe-2S] cluster binding. Residue E454 participates in Mg(2+) binding. The active-site Proton acceptor is S480.

The protein belongs to the IlvD/Edd family. Homodimer. The cofactor is [2Fe-2S] cluster. Requires Mg(2+) as cofactor.

It carries out the reaction (2R)-2,3-dihydroxy-3-methylbutanoate = 3-methyl-2-oxobutanoate + H2O. It catalyses the reaction (2R,3R)-2,3-dihydroxy-3-methylpentanoate = (S)-3-methyl-2-oxopentanoate + H2O. It functions in the pathway amino-acid biosynthesis; L-isoleucine biosynthesis; L-isoleucine from 2-oxobutanoate: step 3/4. Its pathway is amino-acid biosynthesis; L-valine biosynthesis; L-valine from pyruvate: step 3/4. Functions in the biosynthesis of branched-chain amino acids. Catalyzes the dehydration of (2R,3R)-2,3-dihydroxy-3-methylpentanoate (2,3-dihydroxy-3-methylvalerate) into 2-oxo-3-methylpentanoate (2-oxo-3-methylvalerate) and of (2R)-2,3-dihydroxy-3-methylbutanoate (2,3-dihydroxyisovalerate) into 2-oxo-3-methylbutanoate (2-oxoisovalerate), the penultimate precursor to L-isoleucine and L-valine, respectively. This is Dihydroxy-acid dehydratase 2 from Staphylococcus saprophyticus subsp. saprophyticus (strain ATCC 15305 / DSM 20229 / NCIMB 8711 / NCTC 7292 / S-41).